Reading from the N-terminus, the 148-residue chain is Hemoglobin subunit beta-4 (148 aa).

The Globin domain occupies 3 to 148 (DWTDPERSAI…VVSALGRQYH (146 aa)). 2 residues coordinate heme b: His64 and His93.

This sequence belongs to the globin family. In terms of assembly, heterotetramer of two alpha chains and two beta chains. In terms of tissue distribution, red blood cells.

Involved in oxygen transport from gills to the various peripheral tissues. The protein is Hemoglobin subunit beta-4 (hbb4) of Oncorhynchus mykiss (Rainbow trout).